A 101-amino-acid chain; its full sequence is Large ribosomal subunit protein uL23 (101 aa).

Belongs to the universal ribosomal protein uL23 family. As to quaternary structure, part of the 50S ribosomal subunit. Contacts protein L29, and trigger factor when it is bound to the ribosome.

In terms of biological role, one of the early assembly proteins it binds 23S rRNA. One of the proteins that surrounds the polypeptide exit tunnel on the outside of the ribosome. Forms the main docking site for trigger factor binding to the ribosome. This is Large ribosomal subunit protein uL23 from Mannheimia succiniciproducens (strain KCTC 0769BP / MBEL55E).